The sequence spans 657 residues: Pyoverdine export ATP-binding/permease protein PvdT (657 aa).

The ABC transporter domain maps to 6 to 245 (IDLQDIRKSY…ASTNPGALQA (240 aa)). Residue 43–50 (GASGSGKS) coordinates ATP. 4 helical membrane-spanning segments follow: residues 285–305 (ALTL…LAVG), 539–559 (IAAI…LMTV), 590–610 (LSVV…GVLI), and 620–640 (LVAI…FGFM).

Belongs to the ABC transporter superfamily. Macrolide exporter (TC 3.A.1.122) family. As to quaternary structure, part of the tripartite efflux system PvdRT-OpmQ, which is composed of an inner membrane component with both ATPase and permease domains, PvdT, a periplasmic membrane fusion protein, PvdR, and an outer membrane component, OpmQ.

Its subcellular location is the cell inner membrane. Functionally, part of the tripartite efflux system PvdRT-OpmQ required for the secretion into the extracellular milieu of the siderophore pyoverdine (PVD), which is involved in iron acquisition. This subunit binds PVD and drives its secretion by hydrolyzing ATP. The system is responsible for export of newly synthesized PVD after the final steps of biosynthesis have taken place in the periplasm. It is also responsible for recycling of PVD after internalization of ferri-PVD into the periplasm by the outer-membrane receptor FpvA and release of iron from PVD, thus making PVD available for new cycles of iron uptake. This chain is Pyoverdine export ATP-binding/permease protein PvdT, found in Pseudomonas fluorescens (strain Pf0-1).